Here is a 206-residue protein sequence, read N- to C-terminus: Recombination protein RecR (206 aa).

The segment at 60 to 75 (CAMCNTFCEGGLCDIC) adopts a C4-type zinc-finger fold. One can recognise a Toprim domain in the interval 83–178 (RRLMVVHMPA…KVSRLSQGIP (96 aa)).

It belongs to the RecR family.

Functionally, may play a role in DNA repair. It seems to be involved in an RecBC-independent recombinational process of DNA repair. It may act with RecF and RecO. The chain is Recombination protein RecR from Neisseria meningitidis serogroup B (strain ATCC BAA-335 / MC58).